We begin with the raw amino-acid sequence, 535 residues long: T-complex protein 1 subunit beta (535 aa).

Ala2 carries the post-translational modification N-acetylalanine. Position 3 is a phosphoserine (Ser3). N6-acetyllysine is present on Lys13. Position 44 (Gly44) interacts with ADP. Gly44 is an ATP binding site. Asp97 provides a ligand contact to Mg(2+). Positions 98, 99, 100, 101, 168, and 169 each coordinate ADP. Residues Gly98, Thr99, and Thr100 each contribute to the ATP site. Lys181 bears the N6-acetyllysine mark. Lys248 participates in a covalent cross-link: Glycyl lysine isopeptide (Lys-Gly) (interchain with G-Cter in SUMO2). At Ser260 the chain carries Phosphoserine. At Thr261 the chain carries Phosphothreonine. The ADP site is built by Gly410, Glu495, and Lys500. ATP contacts are provided by Glu495 and Lys500.

The protein belongs to the TCP-1 chaperonin family. As to quaternary structure, component of the chaperonin-containing T-complex (TRiC), a hexadecamer composed of two identical back-to-back stacked rings enclosing a protein folding chamber. Each ring is made up of eight different subunits: TCP1/CCT1, CCT2, CCT3, CCT4, CCT5, CCT6A/CCT6, CCT7, CCT8. Interacts with PACRG. Interacts with FLCN. Interacts with DLEC1. Interacts with SVEP1. Post-translationally, the N-terminus is blocked.

The protein resides in the cytoplasm. The enzyme catalyses ATP + H2O = ADP + phosphate + H(+). In terms of biological role, component of the chaperonin-containing T-complex (TRiC), a molecular chaperone complex that assists the folding of actin, tubulin and other proteins upon ATP hydrolysis. The TRiC complex mediates the folding of WRAP53/TCAB1, thereby regulating telomere maintenance. As part of the TRiC complex may play a role in the assembly of BBSome, a complex involved in ciliogenesis regulating transports vesicles to the cilia. The sequence is that of T-complex protein 1 subunit beta (Cct2) from Mus musculus (Mouse).